We begin with the raw amino-acid sequence, 379 residues long: Probable protein phosphatase 2C 46 (379 aa).

The first 20 residues, 1–20 (MLSTLMKLLSACLWPSSSSG), serve as a signal peptide directing secretion. A PPM-type phosphatase domain is found at 42–353 (LVGEFSMAVV…DDITVVIIFL (312 aa)). Ser-73 carries the post-translational modification Phosphoserine. Mn(2+) is bound by residues Asp-84, Gly-85, Asp-285, and Asp-344.

Belongs to the PP2C family. As to quaternary structure, interacts with SAUR19. It depends on Mg(2+) as a cofactor. Mn(2+) is required as a cofactor.

It carries out the reaction O-phospho-L-seryl-[protein] + H2O = L-seryl-[protein] + phosphate. It catalyses the reaction O-phospho-L-threonyl-[protein] + H2O = L-threonyl-[protein] + phosphate. Its function is as follows. May dephosphorylate and repress plasma membrane H(+)-ATPases (PM H(+)-ATPases, e.g. AHA1 and AHA2), thus influencing negatively plant growth and fitness. The chain is Probable protein phosphatase 2C 46 from Arabidopsis thaliana (Mouse-ear cress).